A 170-amino-acid polypeptide reads, in one-letter code: Probable chemoreceptor glutamine deamidase CheD 3 (170 aa).

The protein belongs to the CheD family.

The enzyme catalyses L-glutaminyl-[protein] + H2O = L-glutamyl-[protein] + NH4(+). Functionally, probably deamidates glutamine residues to glutamate on methyl-accepting chemotaxis receptors (MCPs), playing an important role in chemotaxis. The polypeptide is Probable chemoreceptor glutamine deamidase CheD 3 (Dechloromonas aromatica (strain RCB)).